Reading from the N-terminus, the 554-residue chain is Thermosome subunit beta (554 aa).

Residues 532–554 form a disordered region; it reads GKKSGSEPSGKKEKDKEEKSSED. Basic and acidic residues predominate over residues 540–554; it reads SGKKEKDKEEKSSED.

It belongs to the TCP-1 chaperonin family. In terms of assembly, forms a Heterooligomeric complex of two stacked eight-membered rings.

In terms of biological role, molecular chaperone; binds unfolded polypeptides in vitro, and has a weak ATPase activity. This is Thermosome subunit beta (thsB) from Saccharolobus solfataricus (strain ATCC 35092 / DSM 1617 / JCM 11322 / P2) (Sulfolobus solfataricus).